Here is a 66-residue protein sequence, read N- to C-terminus: Large ribosomal subunit protein bL35 (66 aa).

This sequence belongs to the bacterial ribosomal protein bL35 family.

The chain is Large ribosomal subunit protein bL35 from Brucella melitensis biotype 1 (strain ATCC 23456 / CCUG 17765 / NCTC 10094 / 16M).